Here is a 145-residue protein sequence, read N- to C-terminus: Holo-[acyl-carrier-protein] synthase (145 aa).

Mg(2+) contacts are provided by Asp9 and Glu59.

It belongs to the P-Pant transferase superfamily. AcpS family. The cofactor is Mg(2+).

The protein resides in the cytoplasm. The catalysed reaction is apo-[ACP] + CoA = holo-[ACP] + adenosine 3',5'-bisphosphate + H(+). Its function is as follows. Transfers the 4'-phosphopantetheine moiety from coenzyme A to a Ser of acyl-carrier-protein. This is Holo-[acyl-carrier-protein] synthase from Nocardia farcinica (strain IFM 10152).